Consider the following 593-residue polypeptide: Kelch-like protein 2 (593 aa).

The segment at 1 to 29 (METPPLPPACTKQGHQKPLDSKDENPEKH) is disordered. A compositionally biased stretch (basic and acidic residues) spans 17 to 29 (KPLDSKDENPEKH). A BTB domain is found at 56 to 123 (CDVTIVAEDM…VYTAEIQVTE (68 aa)). Kelch repeat units lie at residues 308–353 (LMVV…YMAG), 354–400 (LVFA…VLNG), 402–447 (LYAV…VVGG), 449–496 (LYAV…VLNN), 497–543 (LLYA…AVNG), and 545–591 (LYVV…VIDK).

Component of the BCR(KLHL2) E3 ubiquitin ligase complex, at least composed of CUL3 and KLHL2 and RBX1. Binds actin. Interacts with KLHL12. Interacts (via N-terminus) with FYN (via SH3 domain).

The protein localises to the cytoplasm. Its subcellular location is the cytoskeleton. The protein resides in the cell projection. It is found in the ruffle. It localises to the lamellipodium. The protein localises to the cytosol. It functions in the pathway protein modification; protein ubiquitination. Its function is as follows. Substrate-specific adapter of a BCR (BTB-CUL3-RBX1) E3 ubiquitin ligase complex that mediates the ubiquitination of target proteins, such as NPTXR, WNK1, WNK3 and WNK4, leading most often to their proteasomal degradation. The BCR(KLHL2) complex catalyzes ubiquitination and degradation of NPTXR. Responsible for degradative ubiquitination of the WNK kinases WNK1, WNK3 and WNK4. Plays a role in the reorganization of the actin cytoskeleton. Promotes growth of cell projections in oligodendrocyte precursors. This chain is Kelch-like protein 2, found in Mus musculus (Mouse).